Reading from the N-terminus, the 53-residue chain is Large ribosomal subunit protein bL32c (53 aa).

Belongs to the bacterial ribosomal protein bL32 family.

Its subcellular location is the plastid. The protein resides in the chloroplast. This is Large ribosomal subunit protein bL32c (rpl32) from Guillardia theta (Cryptophyte).